We begin with the raw amino-acid sequence, 59 residues long: Protein translocase subunit SecE (59 aa).

The helical transmembrane segment at 39–59 (VMALFLGLIDALFVALLSFFF) threads the bilayer.

The protein belongs to the SecE/SEC61-gamma family. As to quaternary structure, component of the Sec protein translocase complex. Heterotrimer consisting of SecY, SecE and SecG subunits. The heterotrimers can form oligomers, although 1 heterotrimer is thought to be able to translocate proteins. Interacts with the ribosome. Interacts with SecDF, and other proteins may be involved. Interacts with SecA.

It is found in the cell inner membrane. In terms of biological role, essential subunit of the Sec protein translocation channel SecYEG. Clamps together the 2 halves of SecY. May contact the channel plug during translocation. The polypeptide is Protein translocase subunit SecE (Treponema pallidum (strain Nichols)).